The chain runs to 312 residues: Short chain dehydrogenase pgmD (312 aa).

Positions 46, 47, 171, 207, 211, and 242 each coordinate NADP(+). Residue tyrosine 207 is the Proton donor of the active site. Lysine 211 (lowers pKa of active site Tyr) is an active-site residue.

The protein belongs to the short-chain dehydrogenases/reductases (SDR) family.

Its pathway is pigment biosynthesis. It participates in secondary metabolite biosynthesis. In terms of biological role, short chain dehydrogenase; part of the gene cluster that mediates the biosynthesis of pleosporalin A, ascomycone A, as well as a third cryptic naphthoquinone derived pigment, all responsible for the coloration of conidia. Essential for the production of pleosporalin A, but not the 2 other final products. The pathway begins with the biosynthesis of the cyclized heptaketide 3-acetonyl-1,6,8-trihydroxy-2-naphthaldehyde by the NR-PKS pgmA. The C-6 hydroxyl group is further methylated by the O-methyltransferase pgmB to yield fusarubinaldehyde which is in turn oxidized by the cytochrome P450 monooxygenase pgmC at C-9. The C-1 hydroxyl group is then methylated spontaneously. Although pgmE, pgmD and pgmH are essential for the production of pleosporalin A, it is not the case for the 2 other final products and it remains difficult to assign a specific function to each enzyme. PgmF and pgmG seem not to be involved in pigment biosynthesis although they were regulated by the cluster-specific transcription factor pgmR. This is Short chain dehydrogenase pgmD from Aspergillus terreus (strain NIH 2624 / FGSC A1156).